The sequence spans 219 residues: 2-C-methyl-D-erythritol 4-phosphate cytidylyltransferase (219 aa).

It belongs to the IspD/TarI cytidylyltransferase family. IspD subfamily.

It carries out the reaction 2-C-methyl-D-erythritol 4-phosphate + CTP + H(+) = 4-CDP-2-C-methyl-D-erythritol + diphosphate. Its pathway is isoprenoid biosynthesis; isopentenyl diphosphate biosynthesis via DXP pathway; isopentenyl diphosphate from 1-deoxy-D-xylulose 5-phosphate: step 2/6. Its function is as follows. Catalyzes the formation of 4-diphosphocytidyl-2-C-methyl-D-erythritol from CTP and 2-C-methyl-D-erythritol 4-phosphate (MEP). This Phocaeicola vulgatus (strain ATCC 8482 / DSM 1447 / JCM 5826 / CCUG 4940 / NBRC 14291 / NCTC 11154) (Bacteroides vulgatus) protein is 2-C-methyl-D-erythritol 4-phosphate cytidylyltransferase.